Consider the following 254-residue polypeptide: Transmembrane protein 269 (254 aa).

5 consecutive transmembrane segments (helical) span residues 44 to 64 (IINA…FCSF), 69 to 89 (YCAS…GTMT), 113 to 135 (LASA…IYVL), 171 to 191 (LTKG…LFMI), and 210 to 230 (IVYI…TAFY).

Its subcellular location is the membrane. This chain is Transmembrane protein 269, found in Mus musculus (Mouse).